The primary structure comprises 583 residues: Long-chain-fatty-acid--AMP ligase FadD26 (583 aa).

It belongs to the ATP-dependent AMP-binding enzyme family.

The enzyme catalyses holo-[(phenol)carboxyphthiodiolenone synthase] + a long-chain fatty acid + ATP = a long-chain fatty acyl-[(phenol)carboxyphthiodiolenone synthase] + AMP + diphosphate. The catalysed reaction is eicosanoate + holo-[(phenol)carboxyphthiodiolenone synthase] + ATP = icosanoyl-[(phenol)carboxyphthiodiolenone synthase] + AMP + diphosphate. It catalyses the reaction holo-[(phenol)carboxyphthiodiolenone synthase] + docosanoate + ATP = docosanoyl-[(phenol)carboxyphthiodiolenone synthase] + AMP + diphosphate. Its pathway is lipid metabolism; fatty acid biosynthesis. Catalyzes the activation of long-chain fatty acids as acyl-adenylates (acyl-AMP), which are then transferred to the multifunctional polyketide synthase PpsA for further chain extension. Catalyzes the adenylation of the long-chain fatty acids eicosanoate (C20) or docosanoate (C22), and potentially the very-long-chain fatty acid lignocerate (C24). Involved in the biosynthesis of phthiocerol dimycocerosate (DIM A) and phthiodiolone dimycocerosate (DIM B). This chain is Long-chain-fatty-acid--AMP ligase FadD26 (fadD26), found in Mycobacterium tuberculosis (strain CDC 1551 / Oshkosh).